Consider the following 129-residue polypeptide: uncharacterized protein (129 aa).

The signal sequence occupies residues 1–21 (MAQNKTIAVALLLATLVAVMG).

This is an uncharacterized protein from Oryza sativa subsp. japonica (Rice).